The primary structure comprises 268 residues: F-actin-capping protein subunit alpha (268 aa).

Position 2 is an N-acetylserine (Ser2). The residue at position 17 (Ser17) is a Phosphoserine.

This sequence belongs to the F-actin-capping protein alpha subunit family. Component of the F-actin capping complex, composed of a heterodimer of an alpha and a beta subunit. Interacts with BSP1 (via C-terminus); leading to recruitment of the F-actin capping complex to actin cortical patches and the acomyosin contractile ring.

It localises to the cytoplasm. It is found in the cytoskeleton. The protein localises to the actin patch. Functionally, F-actin-capping proteins bind in a Ca(2+)-independent manner to the fast growing ends of actin filaments (barbed end) thereby blocking the exchange of subunits at these ends. Unlike other capping proteins (such as gelsolin and severin), these proteins do not sever actin filaments. In Saccharomyces cerevisiae (strain ATCC 204508 / S288c) (Baker's yeast), this protein is F-actin-capping protein subunit alpha (CAP1).